Reading from the N-terminus, the 863-residue chain is Paramyosin (863 aa).

The segment at 1-26 is nonhelical region; sequence MSESHVKISRTIIRGTSPSTVRLESP. The stretch at 27–836 forms a coiled coil; that stretch reads VRELEDLLDL…ERTITIKRTI (810 aa). The segment at 837–863 is nonhelical region; it reads GGPGSRAVSVVREINSVSRGNRATSIM.

This sequence belongs to the paramyosin family. Homodimer.

The protein localises to the cytoplasm. It localises to the myofibril. Its function is as follows. Paramyosin is a major structural component of many thick filaments isolated from invertebrate muscles. The protein is Paramyosin of Echinococcus granulosus (Hydatid tapeworm).